Consider the following 657-residue polypeptide: Threonine--tRNA ligase (657 aa).

The region spanning 1 to 61 is the TGS domain; that stretch reads MINVTLPDGS…EGDASVAIIT (61 aa). A catalytic region spans residues 244–549; sequence DHRKLGAQLD…LIENYAGSFP (306 aa). Positions 349, 400, and 526 each coordinate Zn(2+).

It belongs to the class-II aminoacyl-tRNA synthetase family. In terms of assembly, homodimer. The cofactor is Zn(2+).

The protein localises to the cytoplasm. The enzyme catalyses tRNA(Thr) + L-threonine + ATP = L-threonyl-tRNA(Thr) + AMP + diphosphate + H(+). Its function is as follows. Catalyzes the attachment of threonine to tRNA(Thr) in a two-step reaction: L-threonine is first activated by ATP to form Thr-AMP and then transferred to the acceptor end of tRNA(Thr). Also edits incorrectly charged L-seryl-tRNA(Thr). The chain is Threonine--tRNA ligase from Hyphomonas neptunium (strain ATCC 15444).